The following is a 137-amino-acid chain: Phosphoribosyl-AMP cyclohydrolase (137 aa).

Asp-84 is a binding site for Mg(2+). Position 85 (Cys-85) interacts with Zn(2+). Residues Asp-86 and Asp-88 each coordinate Mg(2+). 2 residues coordinate Zn(2+): Cys-101 and Cys-108.

This sequence belongs to the PRA-CH family. Homodimer. The cofactor is Mg(2+). Requires Zn(2+) as cofactor.

It localises to the cytoplasm. It carries out the reaction 1-(5-phospho-beta-D-ribosyl)-5'-AMP + H2O = 1-(5-phospho-beta-D-ribosyl)-5-[(5-phospho-beta-D-ribosylamino)methylideneamino]imidazole-4-carboxamide. It participates in amino-acid biosynthesis; L-histidine biosynthesis; L-histidine from 5-phospho-alpha-D-ribose 1-diphosphate: step 3/9. Its function is as follows. Catalyzes the hydrolysis of the adenine ring of phosphoribosyl-AMP. The protein is Phosphoribosyl-AMP cyclohydrolase of Chlorobaculum tepidum (strain ATCC 49652 / DSM 12025 / NBRC 103806 / TLS) (Chlorobium tepidum).